Reading from the N-terminus, the 512-residue chain is Bifunctional purine biosynthesis protein PurH (512 aa).

The MGS-like domain occupies 1 to 144; that stretch reads MKRALVSVSD…KNYHDVTIVV (144 aa).

This sequence belongs to the PurH family.

It catalyses the reaction (6R)-10-formyltetrahydrofolate + 5-amino-1-(5-phospho-beta-D-ribosyl)imidazole-4-carboxamide = 5-formamido-1-(5-phospho-D-ribosyl)imidazole-4-carboxamide + (6S)-5,6,7,8-tetrahydrofolate. It carries out the reaction IMP + H2O = 5-formamido-1-(5-phospho-D-ribosyl)imidazole-4-carboxamide. Its pathway is purine metabolism; IMP biosynthesis via de novo pathway; 5-formamido-1-(5-phospho-D-ribosyl)imidazole-4-carboxamide from 5-amino-1-(5-phospho-D-ribosyl)imidazole-4-carboxamide (10-formyl THF route): step 1/1. It functions in the pathway purine metabolism; IMP biosynthesis via de novo pathway; IMP from 5-formamido-1-(5-phospho-D-ribosyl)imidazole-4-carboxamide: step 1/1. This chain is Bifunctional purine biosynthesis protein PurH, found in Limosilactobacillus reuteri (strain DSM 20016) (Lactobacillus reuteri).